The sequence spans 272 residues: GATA zinc finger domain-containing protein 1 (272 aa).

A GATA-type zinc finger spans residues 9–33 (CSVCKTTSSSMWKKGPQGEILCHHC). The tract at residues 67 to 120 (TFASTSAAPPQSNGGGGGKQSKQEIHRRSARLRNTKYKSAPAAEKKVSTKGKGR) is disordered. An N6-acetyllysine modification is found at Lys-167. Residue Lys-265 forms a Glycyl lysine isopeptide (Lys-Gly) (interchain with G-Cter in SUMO2) linkage.

Its subcellular location is the nucleus. The sequence is that of GATA zinc finger domain-containing protein 1 (GATAD1) from Bos taurus (Bovine).